Reading from the N-terminus, the 274-residue chain is Diaminopimelate epimerase (274 aa).

Residues N11, Q44, and N64 each coordinate substrate. C73 functions as the Proton donor in the catalytic mechanism. Residues 74–75, N157, N190, and 208–209 each bind substrate; these read GN and ER. C217 serves as the catalytic Proton acceptor. 218 to 219 is a substrate binding site; that stretch reads GS.

It belongs to the diaminopimelate epimerase family. In terms of assembly, homodimer.

The protein localises to the cytoplasm. It carries out the reaction (2S,6S)-2,6-diaminopimelate = meso-2,6-diaminopimelate. It participates in amino-acid biosynthesis; L-lysine biosynthesis via DAP pathway; DL-2,6-diaminopimelate from LL-2,6-diaminopimelate: step 1/1. Its function is as follows. Catalyzes the stereoinversion of LL-2,6-diaminopimelate (L,L-DAP) to meso-diaminopimelate (meso-DAP), a precursor of L-lysine and an essential component of the bacterial peptidoglycan. The sequence is that of Diaminopimelate epimerase from Escherichia coli O81 (strain ED1a).